Reading from the N-terminus, the 128-residue chain is Fluoride-specific ion channel FluC (128 aa).

Transmembrane regions (helical) follow at residues 2–22 (FYSI…RWCL), 35–55 (LGTL…AVVF), 67–87 (LFVI…SVEV), and 96–116 (FGWA…LTAL). Residues G75 and T78 each coordinate Na(+).

This sequence belongs to the fluoride channel Fluc/FEX (TC 1.A.43) family.

The protein resides in the cell inner membrane. The catalysed reaction is fluoride(in) = fluoride(out). With respect to regulation, na(+) is not transported, but it plays an essential structural role and its presence is essential for fluoride channel function. In terms of biological role, fluoride-specific ion channel. Important for reducing fluoride concentration in the cell, thus reducing its toxicity. In Burkholderia cenocepacia (strain ATCC BAA-245 / DSM 16553 / LMG 16656 / NCTC 13227 / J2315 / CF5610) (Burkholderia cepacia (strain J2315)), this protein is Fluoride-specific ion channel FluC.